The following is a 159-amino-acid chain: Ribosomal RNA large subunit methyltransferase H (159 aa).

Residues Gly108 and 127–132 contribute to the S-adenosyl-L-methionine site; that span reads FGPMTF.

Belongs to the RNA methyltransferase RlmH family. As to quaternary structure, homodimer.

It is found in the cytoplasm. The enzyme catalyses pseudouridine(1915) in 23S rRNA + S-adenosyl-L-methionine = N(3)-methylpseudouridine(1915) in 23S rRNA + S-adenosyl-L-homocysteine + H(+). In terms of biological role, specifically methylates the pseudouridine at position 1915 (m3Psi1915) in 23S rRNA. This chain is Ribosomal RNA large subunit methyltransferase H, found in Magnetococcus marinus (strain ATCC BAA-1437 / JCM 17883 / MC-1).